A 179-amino-acid polypeptide reads, in one-letter code: MKQEVEKWRPFGHPDGDIRDLSFLDAHQAVYVQHHEGKEPLEYRFWVTYSLHCFTKDYEHQTNEEKQSLMYHAPKESRPFCQHRYNLARTHLKRTILALPESNVIHAGYGSYAVIEVDLDGGDKAFYFVAFRAFREKKKLRLHVTSAYPISEKQKGKSVKFFTIAYNLLRNKQLPQPSK.

The sequence is that of Protein YjaZ from Escherichia coli (strain K12).